The sequence spans 179 residues: tRNA-splicing endonuclease (179 aa).

Active-site residues include Y115, H123, and K154.

It belongs to the tRNA-intron endonuclease family. Archaeal short subfamily. Homotetramer; although the tetramer contains four active sites, only two participate in the cleavage. Therefore, it should be considered as a dimer of dimers.

The enzyme catalyses pretRNA = a 3'-half-tRNA molecule with a 5'-OH end + a 5'-half-tRNA molecule with a 2',3'-cyclic phosphate end + an intron with a 2',3'-cyclic phosphate and a 5'-hydroxyl terminus.. Functionally, endonuclease that removes tRNA introns. Cleaves pre-tRNA at the 5'- and 3'-splice sites to release the intron. The products are an intron and two tRNA half-molecules bearing 2',3' cyclic phosphate and 5'-OH termini. Recognizes a pseudosymmetric substrate in which 2 bulged loops of 3 bases are separated by a stem of 4 bp. The chain is tRNA-splicing endonuclease from Methanopyrus kandleri (strain AV19 / DSM 6324 / JCM 9639 / NBRC 100938).